Reading from the N-terminus, the 102-residue chain is uncharacterized protein (102 aa).

The N-terminal stretch at 1-22 (MKFKYGATLFSGFLGLSAILAA) is a signal peptide. A lipid anchor (N-palmitoyl cysteine) is attached at Cys-23. Cys-23 is lipidated: S-diacylglycerol cysteine.

Belongs to the MG185/MG260 family.

It localises to the cell membrane. This is an uncharacterized protein from Mycoplasma pneumoniae (strain ATCC 29342 / M129 / Subtype 1) (Mycoplasmoides pneumoniae).